A 507-amino-acid polypeptide reads, in one-letter code: ATP synthase subunit alpha, plastid (507 aa).

170 to 177 (GDRQTGKT) serves as a coordination point for ATP.

It belongs to the ATPase alpha/beta chains family. In terms of assembly, F-type ATPases have 2 components, CF(1) - the catalytic core - and CF(0) - the membrane proton channel. CF(1) has five subunits: alpha(3), beta(3), gamma(1), delta(1), epsilon(1). CF(0) has four main subunits: a, b, b' and c.

It localises to the plastid membrane. The enzyme catalyses ATP + H2O + 4 H(+)(in) = ADP + phosphate + 5 H(+)(out). Its function is as follows. Produces ATP from ADP in the presence of a proton gradient across the membrane. The alpha chain is a regulatory subunit. This Cuscuta gronovii (Common dodder) protein is ATP synthase subunit alpha, plastid.